The chain runs to 367 residues: Peptide chain release factor 2 (367 aa).

At Gln250 the chain carries N5-methylglutamine.

The protein belongs to the prokaryotic/mitochondrial release factor family. In terms of processing, methylated by PrmC. Methylation increases the termination efficiency of RF2.

Its subcellular location is the cytoplasm. Its function is as follows. Peptide chain release factor 2 directs the termination of translation in response to the peptide chain termination codons UGA and UAA. The sequence is that of Peptide chain release factor 2 from Chloroflexus aggregans (strain MD-66 / DSM 9485).